A 270-amino-acid chain; its full sequence is Glutamate racemase (270 aa).

Residues 13-14 and 45-46 each bind substrate; these read DS and YG. Cysteine 77 serves as the catalytic Proton donor/acceptor. 78–79 contributes to the substrate binding site; it reads NT. The active-site Proton donor/acceptor is the cysteine 185. Substrate is bound at residue 186 to 187; the sequence is TH.

This sequence belongs to the aspartate/glutamate racemases family.

The catalysed reaction is L-glutamate = D-glutamate. Its pathway is cell wall biogenesis; peptidoglycan biosynthesis. Functionally, provides the (R)-glutamate required for cell wall biosynthesis. The chain is Glutamate racemase from Vibrio parahaemolyticus serotype O3:K6 (strain RIMD 2210633).